The sequence spans 568 residues: UPF0313 protein FN0734 (568 aa).

The Radical SAM core domain occupies 289 to 562 (ALDTIKYSVT…KQKQKDIVTE (274 aa)). Cysteine 303, cysteine 307, and cysteine 310 together coordinate [4Fe-4S] cluster. Positions 546–568 (VEKDNGKKQKQKDIVTEKRKNRK) are disordered.

Belongs to the UPF0313 family. [4Fe-4S] cluster serves as cofactor.

The sequence is that of UPF0313 protein FN0734 from Fusobacterium nucleatum subsp. nucleatum (strain ATCC 25586 / DSM 15643 / BCRC 10681 / CIP 101130 / JCM 8532 / KCTC 2640 / LMG 13131 / VPI 4355).